Here is a 203-residue protein sequence, read N- to C-terminus: E3 ubiquitin-protein ligase rnf152-B (203 aa).

An RING-type zinc finger spans residues 12 to 55; that stretch reads CQICFNYYSPRRRPKLLDCKHTCCSVCLQQMRASQKDLRCPWCR. The chain crosses the membrane as a helical span at residues 167 to 187; that stretch reads SGVCTVILVACVLVFLLGIVL.

This sequence belongs to the RNF152 family.

The protein localises to the lysosome membrane. It catalyses the reaction S-ubiquitinyl-[E2 ubiquitin-conjugating enzyme]-L-cysteine + [acceptor protein]-L-lysine = [E2 ubiquitin-conjugating enzyme]-L-cysteine + N(6)-ubiquitinyl-[acceptor protein]-L-lysine.. Its pathway is protein modification; protein ubiquitination. Functionally, E3 ubiquitin-protein ligase that acts as a negative regulator of mTORC1 signaling by mediating ubiquitination of RagA/RRAGA and RHEB. Catalyzes 'Lys-63'-linked polyubiquitination of RagA/RRAGA in response to amino acid starvation, thereby regulating mTORC1 signaling. Also mediates monoubiquitination of RHEB, promoting its association with the TSC-TBC complex and subsequent inhibition. Also mediates 'Lys-48'-linked polyubiquitination of target proteins and their subsequent targeting to the proteasome for degradation. This is E3 ubiquitin-protein ligase rnf152-B from Xenopus laevis (African clawed frog).